The chain runs to 1935 residues: Myosin-7 (1935 aa).

Residues 32-81 (DLKKDVYVPDDKEEFVKAKILSREGGKVTAETEHGKTVTVKEDQVLQQNP) form the Myosin N-terminal SH3-like domain. In terms of domain architecture, Myosin motor spans 85-778 (DKIEDMAMLT…LLGLLEEMRD (694 aa)). Lys-129 carries the N6,N6,N6-trimethyllysine modification. 178–185 (GESGAGKT) provides a ligand contact to ATP. Thr-378 is subject to Phosphothreonine. Actin-binding regions lie at residues 655-677 (LNKL…IPNE) and 757-771 (KFGH…GLLG). Residues 781–810 (LSRIITRIQAQSRGVLSRMEFKKLLERRDS) enclose the IQ domain. A coiled-coil region spans residues 839–1935 (LLKSAETEKE…DIGTKGLNEE (1097 aa)). 2 positions are modified to phosphoserine: Ser-1137 and Ser-1269. Thr-1282 is subject to Phosphothreonine. Residue Tyr-1308 is modified to Phosphotyrosine. Phosphothreonine is present on Thr-1309. Ser-1510 is modified (phosphoserine). Thr-1513 is subject to Phosphothreonine. Residues 1907–1935 (EERADIAESQVNKLRAKSRDIGTKGLNEE) form a disordered region. The segment covering 1923-1935 (KSRDIGTKGLNEE) has biased composition (basic and acidic residues).

Belongs to the TRAFAC class myosin-kinesin ATPase superfamily. Myosin family. In terms of assembly, muscle myosin is a hexameric protein that consists of 2 heavy chain subunits (MHC), 2 alkali light chain subunits (MLC) and 2 regulatory light chain subunits (MLC-2). Interacts with ECPAS. Interacts (via C-terminus) with LRRC39.

It is found in the cytoplasm. Its subcellular location is the myofibril. The protein localises to the sarcomere. Its function is as follows. Myosins are actin-based motor molecules with ATPase activity essential for muscle contraction. Forms regular bipolar thick filaments that, together with actin thin filaments, constitute the fundamental contractile unit of skeletal and cardiac muscle. In Sus scrofa (Pig), this protein is Myosin-7 (MYH7).